The sequence spans 309 residues: Epidermal retinol dehydrogenase 2 (309 aa).

The helical transmembrane segment at 11–31 threads the bilayer; that stretch reads LFIFLGKSLFSLLEAMIFALL. An NADP(+)-binding site is contributed by 44–68; the sequence is LITGAGSGLGRLLALQFARLGSVLV. Residue serine 177 participates in substrate binding. Tyrosine 190 serves as the catalytic Proton acceptor. A helical transmembrane segment spans residues 270–290; that stretch reads LLYFMMFLKSFLPLKTGLLIA.

It belongs to the short-chain dehydrogenases/reductases (SDR) family. Detected in adult lung. Detected at low levels in adult brain, heart, testis, placenta, cervix, pancreas, uterus, stomach, rectum, small intestine, colon, esophagus, thymus, skin, and skin keratinocyte. Expression is higher in psoriasis lesions relative to unaffected skin from psoriasis patients. Detected in fetal kidney, skin and lung.

The protein localises to the endoplasmic reticulum membrane. It catalyses the reaction all-trans-retinol--[retinol-binding protein] + NAD(+) = all-trans-retinal--[retinol-binding protein] + NADH + H(+). Its pathway is cofactor metabolism; retinol metabolism. Functionally, oxidoreductase with strong preference for NAD. Active in both the oxidative and reductive directions. Oxidizes all-trans-retinol in all-trans-retinaldehyde. No activity was detected with 11-cis-retinol or 11-cis-retinaldehyde as substrates with either NAD(+)/NADH or NADP(+)/NADPH. The polypeptide is Epidermal retinol dehydrogenase 2 (Homo sapiens (Human)).